The primary structure comprises 595 residues: UvrABC system protein C (595 aa).

Positions 14–91 (SNPGCYLHKD…IQENMPKFNI (78 aa)) constitute a GIY-YIG domain. One can recognise a UVR domain in the interval 196-231 (DKIVNQLKAKMKDMSDQMEFERAAEYRDLIEAVSTL).

This sequence belongs to the UvrC family. Interacts with UvrB in an incision complex.

It localises to the cytoplasm. Its function is as follows. The UvrABC repair system catalyzes the recognition and processing of DNA lesions. UvrC both incises the 5' and 3' sides of the lesion. The N-terminal half is responsible for the 3' incision and the C-terminal half is responsible for the 5' incision. The chain is UvrABC system protein C from Streptococcus thermophilus (strain CNRZ 1066).